A 2788-amino-acid polypeptide reads, in one-letter code: Multiple epidermal growth factor-like domains protein 8 (2788 aa).

Residues 1–27 form the signal peptide; it reads MALGGALAAALALAFAVLGPLSHKVLA. Topologically, residues 28–2590 are extracellular; the sequence is GDCKGQRQVL…FFRQDQAHID (2563 aa). 6 disulfides stabilise this stretch: cysteine 30-cysteine 57, cysteine 142-cysteine 152, cysteine 146-cysteine 158, cysteine 174-cysteine 184, cysteine 178-cysteine 191, and cysteine 193-cysteine 202. The 111-residue stretch at 30-140 folds into the CUB 1 domain; sequence CKGQRQVLRE…LGFNASFRFS (111 aa). An N-linked (GlcNAc...) asparagine glycan is attached at asparagine 50. 2 consecutive EGF-like domains span residues 138-168 and 170-203; these read RFSL…GGPD and GLQE…RACD. Kelch repeat units follow at residues 241 to 287, 290 to 338, 346 to 399, 402 to 453, 459 to 511, and 525 to 575; these read LLAV…AVAW, FLVL…AGHA, WLYV…FHAP, TLLV…FHTA, YMVV…APPS, and VLLV…SRDP. PSI domains follow at residues 561 to 613, 847 to 899, and 900 to 947; these read YCSM…SDCQ, ACSS…ALCP, and LCEE…EECP. Asparagine 1048 carries N-linked (GlcNAc...) asparagine glycosylation. Positions 1074–1115 constitute an EGF-like 3; calcium-binding domain; that stretch reads DVDECRLGLARCHPRATCLNTPLSYECHCQRGYQGDGITHCN. Cystine bridges form between cysteine 1078/cysteine 1091, cysteine 1085/cysteine 1100, cysteine 1102/cysteine 1114, cysteine 1163/cysteine 1171, cysteine 1165/cysteine 1179, cysteine 1182/cysteine 1191, cysteine 1194/cysteine 1208, cysteine 1211/cysteine 1224, cysteine 1213/cysteine 1231, cysteine 1233/cysteine 1242, cysteine 1245/cysteine 1259, cysteine 1263/cysteine 1302, cysteine 1336/cysteine 1367, cysteine 1407/cysteine 1421, cysteine 1415/cysteine 1433, and cysteine 1435/cysteine 1444. 2 consecutive Laminin EGF-like domains span residues 1163 to 1210 and 1211 to 1261; these read CGCN…GCRP and CQCN…SCFR. The 143-residue stretch at 1263 to 1405 folds into the CUB 2 domain; sequence CGGRALLTNV…WGFNASVGSA (143 aa). Asparagine 1271 carries an N-linked (GlcNAc...) asparagine glycan. Position 1353 is a phosphothreonine (threonine 1353). The 43-residue stretch at 1403–1445 folds into the EGF-like 4 domain; it reads GSARCGSGGPGSCPVPQECVPQDGAAGAGLCRCPQGWAGPHCR. Kelch repeat units follow at residues 1522 to 1570, 1580 to 1626, 1632 to 1678, 1684 to 1734, 1739 to 1786, and 1795 to 1840; these read TLWM…SFHA, AMYL…HTLT, SLLL…SAVY, SLYV…HASA, TMVV…ESVA, and RLYI…WCHG. PSI domains follow at residues 1819–1859, 1867–1922, 2003–2061, and 2063–2120; these read PCRL…PPCS, ECRR…NDCR, PCHL…ESCS, and GCAQ…LSCP. N-linked (GlcNAc...) asparagine glycosylation is present at asparagine 2009. The EGF-like 5 domain maps to 2121–2159; sequence PEDECANGHHDCNETQNCHDQPHGYECSCKTGYTMDNVT. 2 disulfides stabilise this stretch: cysteine 2125-cysteine 2138 and cysteine 2132-cysteine 2147. Residues asparagine 2157 and asparagine 2172 are each glycosylated (N-linked (GlcNAc...) asparagine). Disulfide bonds link cysteine 2196-cysteine 2204, cysteine 2198-cysteine 2213, cysteine 2216-cysteine 2225, and cysteine 2228-cysteine 2242. Laminin EGF-like domains lie at 2196–2244 and 2323–2386; these read CRCN…TCRP and CQCN…QCYR. A disordered region spans residues 2465–2507; the sequence is HTVHIQPPPPPPPPPPPADGVPRVASDLGGLGTGSGSGSPVEP. Over residues 2470–2483 the composition is skewed to pro residues; the sequence is QPPPPPPPPPPPAD. A helical membrane pass occupies residues 2591 to 2611; it reads LFVFFSVFFSCFFLFLSLCVL. Topologically, residues 2612 to 2788 are cytoplasmic; sequence LWKAKQALDQ…SQDNLTSMSL (177 aa). Over residues 2761 to 2775 the composition is skewed to gly residues; that stretch reads GGAGGSGHGGGGGRK. The disordered stretch occupies residues 2761-2788; it reads GGAGGSGHGGGGGRKGLLSQDNLTSMSL. The segment covering 2779-2788 has biased composition (polar residues); the sequence is SQDNLTSMSL.

As to expression, expressed in brain.

It localises to the membrane. Acts as a negative regulator of hedgehog signaling. The protein is Multiple epidermal growth factor-like domains protein 8 (Megf8) of Rattus norvegicus (Rat).